A 566-amino-acid chain; its full sequence is Arginine--tRNA ligase (566 aa).

Positions 123–133 (PNIAKPFHIGH) match the 'HIGH' region motif.

This sequence belongs to the class-I aminoacyl-tRNA synthetase family. As to quaternary structure, monomer.

The protein resides in the cytoplasm. The catalysed reaction is tRNA(Arg) + L-arginine + ATP = L-arginyl-tRNA(Arg) + AMP + diphosphate. The protein is Arginine--tRNA ligase of Clostridioides difficile (strain 630) (Peptoclostridium difficile).